We begin with the raw amino-acid sequence, 103 residues long: Large ribosomal subunit protein uL24 (103 aa).

This sequence belongs to the universal ribosomal protein uL24 family. As to quaternary structure, part of the 50S ribosomal subunit.

One of two assembly initiator proteins, it binds directly to the 5'-end of the 23S rRNA, where it nucleates assembly of the 50S subunit. Its function is as follows. One of the proteins that surrounds the polypeptide exit tunnel on the outside of the subunit. The sequence is that of Large ribosomal subunit protein uL24 from Actinobacillus succinogenes (strain ATCC 55618 / DSM 22257 / CCUG 43843 / 130Z).